Here is a 283-residue protein sequence, read N- to C-terminus: Elongation factor Ts (283 aa).

Positions 82–85 (TDFV) are involved in Mg(2+) ion dislocation from EF-Tu.

This sequence belongs to the EF-Ts family.

The protein localises to the cytoplasm. Associates with the EF-Tu.GDP complex and induces the exchange of GDP to GTP. It remains bound to the aminoacyl-tRNA.EF-Tu.GTP complex up to the GTP hydrolysis stage on the ribosome. This chain is Elongation factor Ts, found in Photorhabdus laumondii subsp. laumondii (strain DSM 15139 / CIP 105565 / TT01) (Photorhabdus luminescens subsp. laumondii).